The sequence spans 407 residues: Enolase-binding protein (407 aa).

The signal sequence occupies residues 1 to 24; that stretch reads MALGNALYPLTATVFLCVVGFATS. Topologically, residues 25–366 are extracellular; the sequence is SNENSRFLIN…FGQAYPGFRN (342 aa). N52, N78, N161, and N250 each carry an N-linked (GlcNAc...) asparagine glycan. A helical membrane pass occupies residues 367–387; it reads VAIGAAILFFSVLGVAIIDMI. At 388-407 the chain is on the cytoplasmic side; that stretch reads RRTIANRRAKRLHLGKYSRT.

In terms of assembly, (Microbial infection) Interacts with ENO/enolase from parasites P.berghei and P.falciparum. As to expression, expressed in the female midgut epithelium.

It is found in the cell membrane. Functionally, (Microbial infection) Acts as a receptor for ENO/enolase from parasites P.berghei and P.falciparum. The interaction is involved in the invasion of the mosquito midgut by P.berghei ookinete, but is dispensable for P.falciparum ookinete invasion. The sequence is that of Enolase-binding protein from Anopheles gambiae (African malaria mosquito).